The primary structure comprises 132 residues: Acetylcholinesterase (132 aa).

N-linked (GlcNAc...) asparagine glycosylation occurs at Asn37. Cys45 and Cys72 are joined by a disulfide.

Belongs to the type-B carboxylesterase/lipase family.

It localises to the synapse. Its subcellular location is the secreted. The protein resides in the cell membrane. It catalyses the reaction acetylcholine + H2O = choline + acetate + H(+). Its function is as follows. Rapidly hydrolyzes choline released into the synapse. This Culex pipiens pipiens (Northern house mosquito) protein is Acetylcholinesterase (ACE-1).